The following is a 1073-amino-acid chain: Carbamoyl phosphate synthase large chain (1073 aa).

Positions 2–403 (PKRTDIKSIL…SVQKALRGLE (402 aa)) are carboxyphosphate synthetic domain. Residues arginine 129, arginine 169, glycine 175, glycine 176, glutamate 208, leucine 210, glutamate 215, glycine 241, valine 242, histidine 243, glutamine 285, and glutamate 299 each coordinate ATP. The ATP-grasp 1 domain maps to 133–328 (DKAMKDIGLA…IAKIAAKLAV (196 aa)). Residues glutamine 285, glutamate 299, and asparagine 301 each coordinate Mg(2+). Glutamine 285, glutamate 299, and asparagine 301 together coordinate Mn(2+). Residues 404 to 553 (VGATGFDPKL…YSTYEEECEA (150 aa)) are oligomerization domain. The tract at residues 554–935 (NPSSREKIMI…AFAKAQLGAS (382 aa)) is carbamoyl phosphate synthetic domain. An ATP-grasp 2 domain is found at 678 to 869 (QQMVQRLNLR…LAKVAARVMA (192 aa)). Residues arginine 714, histidine 753, leucine 755, glutamate 760, glycine 785, valine 786, histidine 787, serine 788, glutamine 828, and glutamate 840 each contribute to the ATP site. Mg(2+) contacts are provided by glutamine 828, glutamate 840, and asparagine 842. Mn(2+) contacts are provided by glutamine 828, glutamate 840, and asparagine 842. An MGS-like domain is found at 936-1073 (EILPTAGCAF…LQDLHAGIKA (138 aa)). Positions 936 to 1073 (EILPTAGCAF…LQDLHAGIKA (138 aa)) are allosteric domain.

It belongs to the CarB family. In terms of assembly, composed of two chains; the small (or glutamine) chain promotes the hydrolysis of glutamine to ammonia, which is used by the large (or ammonia) chain to synthesize carbamoyl phosphate. Tetramer of heterodimers (alpha,beta)4. It depends on Mg(2+) as a cofactor. Requires Mn(2+) as cofactor.

The catalysed reaction is hydrogencarbonate + L-glutamine + 2 ATP + H2O = carbamoyl phosphate + L-glutamate + 2 ADP + phosphate + 2 H(+). The enzyme catalyses hydrogencarbonate + NH4(+) + 2 ATP = carbamoyl phosphate + 2 ADP + phosphate + 2 H(+). Its pathway is amino-acid biosynthesis; L-arginine biosynthesis; carbamoyl phosphate from bicarbonate: step 1/1. It functions in the pathway pyrimidine metabolism; UMP biosynthesis via de novo pathway; (S)-dihydroorotate from bicarbonate: step 1/3. Functionally, large subunit of the glutamine-dependent carbamoyl phosphate synthetase (CPSase). CPSase catalyzes the formation of carbamoyl phosphate from the ammonia moiety of glutamine, carbonate, and phosphate donated by ATP, constituting the first step of 2 biosynthetic pathways, one leading to arginine and/or urea and the other to pyrimidine nucleotides. The large subunit (synthetase) binds the substrates ammonia (free or transferred from glutamine from the small subunit), hydrogencarbonate and ATP and carries out an ATP-coupled ligase reaction, activating hydrogencarbonate by forming carboxy phosphate which reacts with ammonia to form carbamoyl phosphate. This Pseudomonas aeruginosa (strain ATCC 15692 / DSM 22644 / CIP 104116 / JCM 14847 / LMG 12228 / 1C / PRS 101 / PAO1) protein is Carbamoyl phosphate synthase large chain.